Consider the following 213-residue polypeptide: Oxidase ustYa (213 aa).

Residues 1 to 26 are disordered; that stretch reads MAERSSNGYKEVPVRQSEESTIAEEE. The chain crosses the membrane as a helical span at residues 48-68; that stretch reads AVWFLIALLLLSNIGLLGGLI. N98 carries N-linked (GlcNAc...) asparagine glycosylation. Short sequence motifs (HXXHC) lie at residues 123 to 127 and 150 to 154; these read HQLHC and HLMHC.

The protein belongs to the ustYa family.

The protein resides in the membrane. The protein operates within mycotoxin biosynthesis. Its function is as follows. Oxidase; part of the gene cluster that mediates the biosynthesis of the secondary metabolite ustiloxin B, an antimitotic tetrapeptide. First, ustA is processed by the subtilisin-like endoprotease Kex2 that is outside the ustiloxin B gene cluster, at the C-terminal side of Arg-Lys, after transfer to Golgi apparatus through the endoplasmic reticulum (ER). Cleavage by KEX2 generates 16 peptides YAIG-I to YAIG-XVI. To process the precursor peptide further, at least two peptidases are necessary to cleave the N-terminal and C-terminal sides of the Tyr-Ala-Ile-Gly core peptide which serves as backbone for the synthesis of ustiloxin B, through cyclization and modification of the tyrosine with a non-protein coding amino acid, norvaline. One of the two peptidases must be the serine peptidase ustP; and the other pepdidase is probably ustH. Macrocyclization of the core peptide derived from ustA requires the tyrosinase ustQ, as well as the homologous oxidases ustYa and ustYb, and leads to the production of the first cyclization product N-desmethylustiloxin F. For the formation of N-desmethylustiloxin F, three oxidation steps are required, hydroxylation at the benzylic position, hydroxylation at either the aromatic ring of Tyr or beta-position of Ile, and oxidative cyclization. UstQ may catalyze the oxidation of a phenol moiety, whereas the ustYa and ustYb are most likely responsible for the remaining two-step oxidations. N-desmethylustiloxin F is then methylated by ustM to yield ustiloxin F which in turn substrate of the cytochrome P450 monooxygenase ustC which catalyzes the formation of S-deoxyustiloxin H. The flavoprotein monooxygenases ustF1 and ustF2 then participate in the modification of the side chain of S-deoxyustiloxin H, leading to the synthesis of an oxime intermediate, via ustiloxin H. Finally, carboxylative dehydration performed by the cysteine desulfurase-like protein ustD yields ustiloxin B. The sequence is that of Oxidase ustYa from Aspergillus flavus (strain ATCC 200026 / FGSC A1120 / IAM 13836 / NRRL 3357 / JCM 12722 / SRRC 167).